A 277-amino-acid chain; its full sequence is Uridine-cytidine kinase 1 (277 aa).

Residue 24 to 32 (GGTASGKST) coordinates ATP. Asp81, Tyr109, His114, Arg163, Arg172, and Gln180 together coordinate substrate. Position 209 (Asp209) interacts with ATP. A disordered region spans residues 241-277 (NHGRSLKRGVAEHGENPSGSSSNLTKRPLLEPSTRPH).

Belongs to the uridine kinase family.

The enzyme catalyses uridine + ATP = UMP + ADP + H(+). It catalyses the reaction cytidine + ATP = CMP + ADP + H(+). It functions in the pathway pyrimidine metabolism; CTP biosynthesis via salvage pathway; CTP from cytidine: step 1/3. It participates in pyrimidine metabolism; UMP biosynthesis via salvage pathway; UMP from uridine: step 1/1. In terms of biological role, phosphorylates uridine and cytidine to uridine monophosphate and cytidine monophosphate. Does not phosphorylate deoxyribonucleosides or purine ribonucleosides. Can use ATP or GTP as a phosphate donor. This is Uridine-cytidine kinase 1 (uck1) from Danio rerio (Zebrafish).